A 253-amino-acid polypeptide reads, in one-letter code: Redox-sensing transcriptional repressor Rex (253 aa).

Positions 26 to 65 (LYLRALTALSERSVPTVSSEELATAAGVNSAKLRKDFSYL) form a DNA-binding region, H-T-H motif. 100-105 (GIGNLG) contributes to the NAD(+) binding site. The tract at residues 217 to 253 (RKAGEDSAAEDEGAPPMRATPASRKGPDGDMPAVMPA) is disordered.

This sequence belongs to the transcriptional regulatory Rex family. As to quaternary structure, homodimer.

It localises to the cytoplasm. Its function is as follows. Modulates transcription in response to changes in cellular NADH/NAD(+) redox state. This is Redox-sensing transcriptional repressor Rex from Streptomyces griseus subsp. griseus (strain JCM 4626 / CBS 651.72 / NBRC 13350 / KCC S-0626 / ISP 5235).